Consider the following 143-residue polypeptide: Large ribosomal subunit protein uL13 (143 aa).

The protein belongs to the universal ribosomal protein uL13 family. In terms of assembly, part of the 50S ribosomal subunit.

This protein is one of the early assembly proteins of the 50S ribosomal subunit, although it is not seen to bind rRNA by itself. It is important during the early stages of 50S assembly. In Caldanaerobacter subterraneus subsp. tengcongensis (strain DSM 15242 / JCM 11007 / NBRC 100824 / MB4) (Thermoanaerobacter tengcongensis), this protein is Large ribosomal subunit protein uL13.